The primary structure comprises 224 residues: Large ribosomal subunit protein uL4 (224 aa).

Residues Arg53 to Ala74 form a disordered region.

It belongs to the universal ribosomal protein uL4 family. Part of the 50S ribosomal subunit.

In terms of biological role, one of the primary rRNA binding proteins, this protein initially binds near the 5'-end of the 23S rRNA. It is important during the early stages of 50S assembly. It makes multiple contacts with different domains of the 23S rRNA in the assembled 50S subunit and ribosome. Forms part of the polypeptide exit tunnel. The sequence is that of Large ribosomal subunit protein uL4 from Chlamydia pneumoniae (Chlamydophila pneumoniae).